The sequence spans 267 residues: MQEFTNPFPIGSSSLIHCMTNEISCEMLANGILALGCKPVMADDPREVLDFTKQSQALFINLGHLSAEKEKAIRMAASYANQSSLPMVVDAVGVTTSSIRKSLVKDLLDYRPTVIKGNMSEIRSLVGLKHHGVGVDASAKDQETEDLLQVLKDWCQTYPGMSFLVTGPKDLVVSKNQVAVLENGCTELDWITGTGDLVGALTAVFLSQGKTGFEASCLAVSYLNIAAEKIVVQGMGLEEFRYQVLNQLSLLRRDENWLDTIKGEVYE.

Methionine 41 contributes to the substrate binding site. Residues lysine 116 and threonine 166 each coordinate ATP. Residue glycine 193 participates in substrate binding.

It belongs to the Thz kinase family. Mg(2+) is required as a cofactor.

It catalyses the reaction 5-(2-hydroxyethyl)-4-methylthiazole + ATP = 4-methyl-5-(2-phosphooxyethyl)-thiazole + ADP + H(+). It participates in cofactor biosynthesis; thiamine diphosphate biosynthesis; 4-methyl-5-(2-phosphoethyl)-thiazole from 5-(2-hydroxyethyl)-4-methylthiazole: step 1/1. Its function is as follows. Catalyzes the phosphorylation of the hydroxyl group of 4-methyl-5-beta-hydroxyethylthiazole (THZ). This Streptococcus pneumoniae (strain 70585) protein is Hydroxyethylthiazole kinase 2.